Here is a 660-residue protein sequence, read N- to C-terminus: Poly(A)-specific ribonuclease PARN (660 aa).

A divalent metal cation contacts are provided by aspartate 28 and glutamate 30. In terms of domain architecture, R3H spans 177–243 (REFIRSVEEK…ERFIQISKVD (67 aa)). Residues aspartate 290 and aspartate 380 each contribute to the a divalent metal cation site. 2 positions are modified to phosphoserine: serine 560 and serine 614. A disordered region spans residues 606–660 (ADEGGASVSPVAEEAELDEFSANQSQGKRSRKHKKRKSDASETTPPALFDVPQVW). Basic residues predominate over residues 633-642 (KRSRKHKKRK). Serine 643 is modified (phosphoserine). Threonine 649 carries the post-translational modification Phosphothreonine.

It belongs to the CAF1 family. It depends on a divalent metal cation as a cofactor.

The protein resides in the cytoplasm. It is found in the nucleus. The catalysed reaction is Exonucleolytic cleavage of poly(A) to 5'-AMP.. In terms of biological role, 3'-exoribonuclease that has a preference for poly(A) tails of mRNAs, thereby efficiently degrading poly(A) tails. Exonucleolytic degradation of the poly(A) tail is often the first step in the decay of eukaryotic mRNAs and is also used to silence certain maternal mRNAs translationally during oocyte maturation and early embryonic development. The sequence is that of Poly(A)-specific ribonuclease PARN (parn) from Danio rerio (Zebrafish).